We begin with the raw amino-acid sequence, 453 residues long: Ribulose bisphosphate carboxylase large chain (453 aa).

A propeptide spanning residues 1–2 is cleaved from the precursor; it reads MS. The residue at position 3 (Pro3) is an N-acetylproline. Lys14 bears the N6,N6,N6-trimethyllysine mark. Asn123 and Thr173 together coordinate substrate. The active-site Proton acceptor is the Lys175. Residue Lys177 participates in substrate binding. Mg(2+) contacts are provided by Lys201, Asp203, and Glu204. Residue Lys201 is modified to N6-carboxylysine. The Proton acceptor role is filled by His294. 3 residues coordinate substrate: Arg295, His327, and Ser379.

This sequence belongs to the RuBisCO large chain family. Type I subfamily. In terms of assembly, heterohexadecamer of 8 large chains and 8 small chains; disulfide-linked. The disulfide link is formed within the large subunit homodimers. It depends on Mg(2+) as a cofactor. The disulfide bond which can form in the large chain dimeric partners within the hexadecamer appears to be associated with oxidative stress and protein turnover.

Its subcellular location is the plastid. It localises to the chloroplast. The catalysed reaction is 2 (2R)-3-phosphoglycerate + 2 H(+) = D-ribulose 1,5-bisphosphate + CO2 + H2O. It carries out the reaction D-ribulose 1,5-bisphosphate + O2 = 2-phosphoglycolate + (2R)-3-phosphoglycerate + 2 H(+). RuBisCO catalyzes two reactions: the carboxylation of D-ribulose 1,5-bisphosphate, the primary event in carbon dioxide fixation, as well as the oxidative fragmentation of the pentose substrate in the photorespiration process. Both reactions occur simultaneously and in competition at the same active site. In Crucianella angustifolia (Narrow-leaved crosswort), this protein is Ribulose bisphosphate carboxylase large chain.